The primary structure comprises 256 residues: MLKIADKTFQSRLFTGTGKFSNRHVMAEALAASGSELVTMALKRIDLAQRDDDILAPLLSMQMNLLPNTSGAKNAADAVYAAELAREALATNWLKLEIHPDPKYLMPDPIETLLAAEQLVKQGFIVLPYCHADPVLCKRLEEVGCAAVMPLGSPIGSNQGLASKTFLEIIIDQAKVPVIVDAGIGSPSDAAQAMELGADAVLVNTAIAAAHDPIAMAKAFKLAVEAGRMAYESGLPSRVKMATASSPLTGFLDFVS.

The active-site Schiff-base intermediate with DXP is the Lys95. 1-deoxy-D-xylulose 5-phosphate contacts are provided by residues Gly156, 182–183 (AG), and 204–205 (NT).

The protein belongs to the ThiG family. Homotetramer. Forms heterodimers with either ThiH or ThiS.

The protein resides in the cytoplasm. It catalyses the reaction [ThiS sulfur-carrier protein]-C-terminal-Gly-aminoethanethioate + 2-iminoacetate + 1-deoxy-D-xylulose 5-phosphate = [ThiS sulfur-carrier protein]-C-terminal Gly-Gly + 2-[(2R,5Z)-2-carboxy-4-methylthiazol-5(2H)-ylidene]ethyl phosphate + 2 H2O + H(+). It functions in the pathway cofactor biosynthesis; thiamine diphosphate biosynthesis. Catalyzes the rearrangement of 1-deoxy-D-xylulose 5-phosphate (DXP) to produce the thiazole phosphate moiety of thiamine. Sulfur is provided by the thiocarboxylate moiety of the carrier protein ThiS. In vitro, sulfur can be provided by H(2)S. The protein is Thiazole synthase of Vibrio cholerae serotype O1 (strain ATCC 39541 / Classical Ogawa 395 / O395).